A 416-amino-acid polypeptide reads, in one-letter code: Histidine--tRNA ligase (416 aa).

The protein belongs to the class-II aminoacyl-tRNA synthetase family. Homodimer.

It localises to the cytoplasm. It carries out the reaction tRNA(His) + L-histidine + ATP = L-histidyl-tRNA(His) + AMP + diphosphate + H(+). This is Histidine--tRNA ligase from Clostridium novyi (strain NT).